Reading from the N-terminus, the 301-residue chain is MPT51 antigen (301 aa).

Positions 1–36 (MRGLSAVVRVLCVAALAVGVFAAAVLLAGTAGNAKA) are cleaved as a signal peptide.

The protein belongs to the mycobacterial A85 antigen family. As to quaternary structure, homodimer.

The protein localises to the secreted. May have a role in host tissue attachment, whereby ligands may include the serum protein fibronectin and small sugars. This chain is MPT51 antigen (mpt51), found in Mycobacterium leprae (strain TN).